Reading from the N-terminus, the 390-residue chain is Copper-containing nitrite reductase (390 aa).

A signal peptide spans Met1–Ala18. Residue Cys19 is the site of N-palmitoyl cysteine attachment. Cys19 is lipidated: S-diacylglycerol cysteine. Residues Glu30–Ser51 are disordered. Plastocyanin-like domains lie at Trp101–Glu195 and Gly245–Glu346. Positions 134, 139, 174, 175, 183, and 188 each coordinate Cu cation. Position 139 (His139) interacts with substrate. His280 lines the substrate pocket. Residue His329 coordinates Cu cation. The segment at Gly367–Tyr390 is disordered. The span at Ala368–Tyr390 shows a compositional bias: low complexity. Tandem repeats lie at residues Ala371 to Pro375, Ala376 to Pro380, and Ala381 to Ser385. Residues Ala371–Ser385 form a 3 X 5 AA tandem repeats of A-A-S-A-P region.

It belongs to the multicopper oxidase family. Homotrimer. It depends on Cu(+) as a cofactor. Cu(2+) is required as a cofactor.

It localises to the cell outer membrane. It carries out the reaction nitric oxide + Fe(III)-[cytochrome c] + H2O = Fe(II)-[cytochrome c] + nitrite + 2 H(+). Functionally, catalyzes the reduction of nitrite to nitric oxide (NO). It could be essential for growth and survival in oxygen-depleted environments. The protein is Copper-containing nitrite reductase (aniA) of Neisseria meningitidis serogroup B (strain ATCC BAA-335 / MC58).